Here is a 209-residue protein sequence, read N- to C-terminus: Large ribosomal subunit protein bL25 (209 aa).

The tract at residues 190 to 209 (LKSEEAASEGAAEEEAKDGE) is disordered. The segment covering 200–209 (AAEEEAKDGE) has biased composition (acidic residues).

The protein belongs to the bacterial ribosomal protein bL25 family. CTC subfamily. As to quaternary structure, part of the 50S ribosomal subunit; part of the 5S rRNA/L5/L18/L25 subcomplex. Contacts the 5S rRNA. Binds to the 5S rRNA independently of L5 and L18.

In terms of biological role, this is one of the proteins that binds to the 5S RNA in the ribosome where it forms part of the central protuberance. The protein is Large ribosomal subunit protein bL25 of Brucella anthropi (strain ATCC 49188 / DSM 6882 / CCUG 24695 / JCM 21032 / LMG 3331 / NBRC 15819 / NCTC 12168 / Alc 37) (Ochrobactrum anthropi).